The following is a 100-amino-acid chain: UPF0213 protein YhbQ (100 aa).

In terms of domain architecture, GIY-YIG spans 2 to 77 (TPWFLYLIRT…KQLTKRQKER (76 aa)).

This sequence belongs to the UPF0213 family.

In Escherichia coli O81 (strain ED1a), this protein is UPF0213 protein YhbQ.